Reading from the N-terminus, the 47-residue chain is Delta-actitoxin-Cgg1b (47 aa).

Residue Pro3 is modified to Hydroxyproline. Cystine bridges form between Cys4–Cys44, Cys6–Cys34, and Cys27–Cys45.

The protein belongs to the sea anemone sodium channel inhibitory toxin family. Type I subfamily.

The protein localises to the secreted. Its subcellular location is the nematocyst. Binds voltage-dependently at site 3 of sodium channels (Nav) and inhibits the inactivation, thereby blocking neuronal transmission. The chain is Delta-actitoxin-Cgg1b from Condylactis gigantea (Giant Caribbean anemone).